We begin with the raw amino-acid sequence, 732 residues long: Catalase-peroxidase (732 aa).

Over residues M1–G11 the composition is skewed to basic and acidic residues. Positions M1 to R24 are disordered. A cross-link (tryptophyl-tyrosyl-methioninium (Trp-Tyr) (with M-245)) is located at residues W97 to Y219. Residue H98 is the Proton acceptor of the active site. The tryptophyl-tyrosyl-methioninium (Tyr-Met) (with W-97) cross-link spans Y219–M245. A heme b-binding site is contributed by H260.

The protein belongs to the peroxidase family. Peroxidase/catalase subfamily. In terms of assembly, homodimer or homotetramer. The cofactor is heme b. In terms of processing, formation of the three residue Trp-Tyr-Met cross-link is important for the catalase, but not the peroxidase activity of the enzyme.

The enzyme catalyses H2O2 + AH2 = A + 2 H2O. It carries out the reaction 2 H2O2 = O2 + 2 H2O. In terms of biological role, bifunctional enzyme with both catalase and broad-spectrum peroxidase activity. The protein is Catalase-peroxidase of Rhodopseudomonas palustris (strain HaA2).